The chain runs to 195 residues: Probable DNA-directed RNA polymerase subunit delta (195 aa).

An HTH HARE-type domain is found at 14–83; the sequence is LSMIEVARAI…GDNKWGLRSW (70 aa). 2 stretches are compositionally biased toward acidic residues: residues 120-138 and 145-195; these read DSDA…DAYE and YDDE…TSEE. The disordered stretch occupies residues 120–195; that stretch reads DSDAIDYNAD…SDDDAETSEE (76 aa).

Belongs to the RpoE family. In terms of assembly, RNAP is composed of a core of 2 alpha, a beta and a beta' subunits. The core is associated with a delta subunit and one of several sigma factors.

Functionally, participates in both the initiation and recycling phases of transcription. In the presence of the delta subunit, RNAP displays an increased specificity of transcription, a decreased affinity for nucleic acids, and an increased efficiency of RNA synthesis because of enhanced recycling. This chain is Probable DNA-directed RNA polymerase subunit delta, found in Streptococcus pneumoniae serotype 2 (strain D39 / NCTC 7466).